The following is a 461-amino-acid chain: uncharacterized protein (461 aa).

This is an uncharacterized protein from Saccharomyces cerevisiae (strain ATCC 204508 / S288c) (Baker's yeast).